An 888-amino-acid chain; its full sequence is MATTTDKQVSPTSPSFVYNLDHEDRNTSLKSGRAVLTDFNEQQFVKFDKGCSIETLLKERTSFIDQLLKKIWEHFFSKDECEQLTLVAVGGYGRGELQPYSDIDLLILGENFIELQPKIVEFITYLWDIGFEVGHAVRNLEDCIEAGREDVTTATNLLEARWLAGNYEQFLSLQNLFNLKSFWPSHEFFQAKLEEQEKRHKRYNDTLYQLEPNIKESPGGLRDIQTILWVAKRHFGASSLQELMQHNFISLQEYKEIQAAYLYLNRIRFALHRLKKRHEDRLLFDHQQQLAELLNHDDRPEHNDSIKAVEAFMKPYYQNAHIVARLNEILLQHFKEEIYHFAEDKIEPINPRFRIINNYLDVVKENLFAKNPTALLEIFIIIENYQHLIQGIRSRTIRLIRNHLHLIDDQFRSDPINKALFIEIFRQPKGVNAAVKRMYAYGILGAYLPSFKKITGLMQFNIFHAYTVDEHTILVIRNLRRFFIKQHAYEFPTAHQIATQLCKPEILLLAGLFHDIAKGRNGAHEKLGAVDAKAFSQKHNLNKNDTDLLSWLVLRHLDFSYVAQKKDLSDPEIIQQFAEKVGTQQRLDYLYLLTLADVRSTSDEVWNDWKNQLFLQLYHNTTQALDSSSSQPRDRVKQAIFNKEKASELLKKRGLIPMHFQGFWQAFEQTDFFNRQSAAEIARITRVLFEEDHEAINIHLQPTTSRGATELIIYMHDRDYLFAQFTQIIDKLDLNIVEAKIYSGEDDMTLVIIYLLNRESTSITDPMILTEIEETLKHQLFLKDDTMPPTQPEPRRIRVFEMPTHIQFQEINEELTELSISTKDIPGLLAKIGQAFKSCKIRVHDAKINTVGEKAEDTFMISSTTNESIHTRHSQEELKQALLNNIEQ.

The tract at residues 1–348 (MATTTDKQVS…YHFAEDKIEP (348 aa)) is uridylyltransferase. Positions 349-709 (INPRFRIINN…LQPTTSRGAT (361 aa)) are uridylyl-removing. An HD domain is found at 468 to 590 (VDEHTILVIR…VGTQQRLDYL (123 aa)). ACT domains follow at residues 710–787 (ELII…DDTM) and 817–888 (ELSI…NIEQ).

The protein belongs to the GlnD family. It depends on Mg(2+) as a cofactor.

It carries out the reaction [protein-PII]-L-tyrosine + UTP = [protein-PII]-uridylyl-L-tyrosine + diphosphate. It catalyses the reaction [protein-PII]-uridylyl-L-tyrosine + H2O = [protein-PII]-L-tyrosine + UMP + H(+). With respect to regulation, uridylyltransferase (UTase) activity is inhibited by glutamine, while glutamine activates uridylyl-removing (UR) activity. In terms of biological role, modifies, by uridylylation and deuridylylation, the PII regulatory proteins (GlnB and homologs), in response to the nitrogen status of the cell that GlnD senses through the glutamine level. Under low glutamine levels, catalyzes the conversion of the PII proteins and UTP to PII-UMP and PPi, while under higher glutamine levels, GlnD hydrolyzes PII-UMP to PII and UMP (deuridylylation). Thus, controls uridylylation state and activity of the PII proteins, and plays an important role in the regulation of nitrogen assimilation and metabolism. The sequence is that of Bifunctional uridylyltransferase/uridylyl-removing enzyme from Hydrogenovibrio crunogenus (strain DSM 25203 / XCL-2) (Thiomicrospira crunogena).